A 562-amino-acid polypeptide reads, in one-letter code: NAD-dependent malic enzyme (562 aa).

Tyr-101 (proton donor) is an active-site residue. Residue Arg-154 participates in NAD(+) binding. Catalysis depends on Lys-172, which acts as the Proton acceptor. The a divalent metal cation site is built by Glu-243, Asp-244, and Asp-267. Asp-267 and Asn-415 together coordinate NAD(+).

The protein belongs to the malic enzymes family. Homotetramer. Requires Mg(2+) as cofactor. The cofactor is Mn(2+).

It catalyses the reaction (S)-malate + NAD(+) = pyruvate + CO2 + NADH. It carries out the reaction oxaloacetate + H(+) = pyruvate + CO2. The sequence is that of NAD-dependent malic enzyme from Shewanella frigidimarina (strain NCIMB 400).